Reading from the N-terminus, the 391-residue chain is Transaldolase (391 aa).

The segment at 1–329 (MGKNLLEQLR…RLKVLDGQEH (329 aa)) is transaldolase. The Schiff-base intermediate with substrate role is filled by K136. EF-hand domains follow at residues 329-364 (HIKH…FDAL) and 365-387 (DRDH…AFRL). Residues D342, D344, D346, E353, D365, D367, D369, K371, and E376 each contribute to the Ca(2+) site.

The protein belongs to the transaldolase family. Type 1 subfamily.

It is found in the cytoplasm. It carries out the reaction D-sedoheptulose 7-phosphate + D-glyceraldehyde 3-phosphate = D-erythrose 4-phosphate + beta-D-fructose 6-phosphate. It participates in carbohydrate degradation; pentose phosphate pathway; D-glyceraldehyde 3-phosphate and beta-D-fructose 6-phosphate from D-ribose 5-phosphate and D-xylulose 5-phosphate (non-oxidative stage): step 2/3. In terms of biological role, transaldolase is important for the balance of metabolites in the pentose-phosphate pathway. This is Transaldolase from Synechocystis sp. (strain ATCC 27184 / PCC 6803 / Kazusa).